The chain runs to 603 residues: ABC transporter E family member 1 (603 aa).

4Fe-4S ferredoxin-type domains follow at residues 7-39 (RIAI…KLCI) and 46-75 (KSAF…IINL). ABC transporter domains follow at residues 70–315 (IQII…FLAG) and 344–566 (VKSY…LSHL). ATP contacts are provided by residues 110 to 117 (GTNGIGKS) and 381 to 388 (GENGTGKT).

The protein belongs to the ABC transporter superfamily. ABCE family. Expressed in roots, stems, leaves, flowers and siliques.

It localises to the membrane. This Arabidopsis thaliana (Mouse-ear cress) protein is ABC transporter E family member 1 (ABCE1).